The sequence spans 648 residues: MIKRETQVDQILKDIRGIVNQMVPREAKITEIEFEGPELVIYVKNPEAIMKDGELIKDLAKVLKKRISIRPDPDVLLPPEEAEKLIFEIVPKEAEITNIAFDPSVGEVLIEAKKPGLVIGKNGETLRLITQKVKWAPKVVRTPPLQSQTIYSIRQILQSESKDRRKFLRQVGRNIYRKPEYKSRWIRITGLGGFREVGRSALLVQTDESYVLVDFGVNVAALNDPYKAFPHFDAPEFQYVLKEGLLDAIIITHAHLDHSGMLPYLFRYNLFDGPIYTTPPTRDLMVLLQKDFIEIQQSNGQDPLYRPRDIKEVIKHTITLDYGEVRDISPDIRLTLHNAGHILGSAIVHLHIGNGLHNIAITGDFKFIPTRLLEPANAKFPRLETLVMESTYGGANDIQMPREEAEKRLIEVIHQTLKRGGKVLIPAMAVGRAQEVMMVLEDYARIGAIDAPIYLDGMIWEATAIHTAYPEYLSRRLREQIFKEGYNPFLSEIFHPVANSKERQDIIDSNEPAIIIASSGMLVGGPSVEYFKQLAPDPRNSIIFVSYQAEGTLGRQVQSGVREIPMVGEEGRTEVIKVNMEVHTIDGFSGHADRRELMNYVAKVRPRPERVITVHGEPQKCLDLATSIHRKFGLSTRAPNNLDTIRLR.

A not required for dimerization, required for cleavage at some sites region spans residues 1-179 (MIKRETQVDQ…QVGRNIYRKP (179 aa)). Residues 9–76 (DQILKDIRGI…ISIRPDPDVL (68 aa)) form a KHa region. Residues 77–144 (LPPEEAEKLI…WAPKVVRTPP (68 aa)) are KHb. The tract at residues 185-395 (WIRITGLGGF…LVMESTYGGA (211 aa)) is metallo-beta-lactamase N-terminus. His-253, His-255, Asp-257, His-258, His-341, and Asp-364 together coordinate Zn(2+). The interval 396–589 (NDIQMPREEA…MEVHTIDGFS (194 aa)) is beta-Casp. Positions 590–648 (GHADRRELMNYVAKVRPRPERVITVHGEPQKCLDLATSIHRKFGLSTRAPNNLDTIRLR) are metallo-beta-lactamase C-terminus. Zn(2+) is bound at residue His-615.

The protein belongs to the metallo-beta-lactamase superfamily. RNA-metabolizing metallo-beta-lactamase-like family. FttA subfamily. As to quaternary structure, homodimer. Interacts with RNA polymerase (RNAP), interacts with the Spt4-Spt5 complex. Zn(2+) serves as cofactor.

EndoRNase activity is inhibited by 1,10-phenanthroline. In terms of biological role, terminates transcription on the whole genome. Termination is linked to FttA-mediated RNA cleavage and does not require NTP hydrolysis. Cleaves endonucleolytically at the RNA exit channel of RNA polymerase (RNAP); the 5'-3' exonuclease activity of this protein degrades the nascent RNA released from RNAP. Functionally, a single-stranded endoribonuclease (endoRNase) with a preference for cleavage at CA dinucleotides. Has 5'-3' exoribonuclease (exoRNase) activity on 5'-monophosphorylated RNA; this activity does not occur on 5'-tri-phosphorylated or 5'-OH substrates. Also has weak activity 5'-3' exodeoxyribonuclease activity on ssDNA. The chain is Transcription termination factor FttA from Pyrococcus abyssi (strain GE5 / Orsay).